Here is a 307-residue protein sequence, read N- to C-terminus: Oxygen-dependent coproporphyrinogen-III oxidase (307 aa).

A substrate-binding site is contributed by S99. Residues H103 and H113 each coordinate a divalent metal cation. H113 acts as the Proton donor in catalysis. Substrate is bound at residue 115–117 (NVR). A divalent metal cation-binding residues include H152 and H182. The segment at 247–282 (YVEFNLVFDRGTLFGLQSGGRTESILMSMPPVVNWR) is important for dimerization. 265-267 (GGR) lines the substrate pocket.

The protein belongs to the aerobic coproporphyrinogen-III oxidase family. As to quaternary structure, homodimer. The cofactor is a divalent metal cation.

The protein localises to the cytoplasm. The catalysed reaction is coproporphyrinogen III + O2 + 2 H(+) = protoporphyrinogen IX + 2 CO2 + 2 H2O. It functions in the pathway porphyrin-containing compound metabolism; protoporphyrin-IX biosynthesis; protoporphyrinogen-IX from coproporphyrinogen-III (O2 route): step 1/1. Involved in the heme biosynthesis. Catalyzes the aerobic oxidative decarboxylation of propionate groups of rings A and B of coproporphyrinogen-III to yield the vinyl groups in protoporphyrinogen-IX. The protein is Oxygen-dependent coproporphyrinogen-III oxidase of Paraburkholderia phytofirmans (strain DSM 17436 / LMG 22146 / PsJN) (Burkholderia phytofirmans).